The primary structure comprises 200 residues: Lipopolysaccharide core heptose(II)-phosphate phosphatase (200 aa).

The first 25 residues, 1-25, serve as a signal peptide directing secretion; sequence MLAFCRSSLKSKKYFIILLALAAIA.

The protein belongs to the phosphoglycerate mutase family. Ais subfamily.

The protein resides in the periplasm. The protein operates within bacterial outer membrane biogenesis; lipopolysaccharide metabolism. Catalyzes the dephosphorylation of heptose(II) of the outer membrane lipopolysaccharide core. This chain is Lipopolysaccharide core heptose(II)-phosphate phosphatase, found in Escherichia coli O157:H7.